Consider the following 157-residue polypeptide: NADPH-dependent 7-cyano-7-deazaguanine reductase (157 aa).

The Thioimide intermediate role is filled by Cys-55. Asp-62 acts as the Proton donor in catalysis. Substrate contacts are provided by residues 77 to 79 and 96 to 97; these read VES and HE.

Belongs to the GTP cyclohydrolase I family. QueF type 1 subfamily.

It localises to the cytoplasm. The catalysed reaction is 7-aminomethyl-7-carbaguanine + 2 NADP(+) = 7-cyano-7-deazaguanine + 2 NADPH + 3 H(+). It participates in tRNA modification; tRNA-queuosine biosynthesis. In terms of biological role, catalyzes the NADPH-dependent reduction of 7-cyano-7-deazaguanine (preQ0) to 7-aminomethyl-7-deazaguanine (preQ1). The polypeptide is NADPH-dependent 7-cyano-7-deazaguanine reductase (Neisseria meningitidis serogroup B (strain ATCC BAA-335 / MC58)).